A 565-amino-acid polypeptide reads, in one-letter code: Hemagglutinin-neuraminidase (565 aa).

Over 1-20 the chain is Intravirion; that stretch reads MVAEDAPVRGTCRVLFRTTT. Residues 21-41 traverse the membrane as a helical segment; the sequence is LIFLCTLLALSISILYESLII. Topologically, residues 42-565 are virion surface; it reads RKQIMSQAGS…VPFIRQVTLS (524 aa). 2 N-linked (GlcNAc...) asparagine; by host glycosylation sites follow: Asn-110 and Asn-139. 3 cysteine pairs are disulfide-bonded: Cys-161–Cys-185, Cys-175–Cys-236, and Cys-227–Cys-240. The tract at residues 223–228 is involved in neuraminidase activity; the sequence is NRKSCS. N-linked (GlcNAc...) asparagine; by host glycosylation occurs at Asn-267. 3 disulfides stabilise this stretch: Cys-333-Cys-454, Cys-365-Cys-375, and Cys-448-Cys-458. Asn-504 carries N-linked (GlcNAc...) asparagine; by host glycosylation. A disulfide bond links Cys-528 and Cys-539.

The protein belongs to the paramyxoviruses hemagglutinin-neuraminidase family. Homotetramer; composed of disulfide-linked homodimers. Interacts with F protein trimer.

The protein resides in the virion membrane. The protein localises to the host cell membrane. It catalyses the reaction Hydrolysis of alpha-(2-&gt;3)-, alpha-(2-&gt;6)-, alpha-(2-&gt;8)- glycosidic linkages of terminal sialic acid residues in oligosaccharides, glycoproteins, glycolipids, colominic acid and synthetic substrates.. In terms of biological role, attaches the virus to sialic acid-containing cell receptors and thereby initiating infection. Binding of HN protein to the receptor induces a conformational change that allows the F protein to trigger virion/cell membranes fusion. Functionally, neuraminidase activity ensures the efficient spread of the virus by dissociating the mature virions from the neuraminic acid containing glycoproteins. The chain is Hemagglutinin-neuraminidase (HN) from Canis lupus familiaris (Dog).